We begin with the raw amino-acid sequence, 238 residues long: 3-dehydroquinate dehydratase (238 aa).

3-dehydroquinate is bound by residues 35-37 (ELR) and Arg70. His133 acts as the Proton donor/acceptor in catalysis. Lys160 serves as the catalytic Schiff-base intermediate with substrate. The 3-dehydroquinate site is built by Arg202 and Gln225.

It belongs to the type-I 3-dehydroquinase family. As to quaternary structure, homodimer.

The enzyme catalyses 3-dehydroquinate = 3-dehydroshikimate + H2O. Its pathway is metabolic intermediate biosynthesis; chorismate biosynthesis; chorismate from D-erythrose 4-phosphate and phosphoenolpyruvate: step 3/7. Functionally, involved in the third step of the chorismate pathway, which leads to the biosynthesis of aromatic amino acids. Catalyzes the cis-dehydration of 3-dehydroquinate (DHQ) and introduces the first double bond of the aromatic ring to yield 3-dehydroshikimate. The polypeptide is 3-dehydroquinate dehydratase (Staphylococcus aureus (strain MSSA476)).